A 488-amino-acid polypeptide reads, in one-letter code: MPSMLSLFYLAQSLFLLLLFPLYGHASVLKRGNNDPFYQPPAHWKSKQPGDILRWRKIEPKFIGGDFNVAEAYQLLYRTSQNTPNEPQHTVTTILVPHNAKKDILVVGSVAQDANGQQCTPSAGYTYNSESNFVFWLDETFFLQYLQEGYIMTIPDKEGPKNAFAAGRMEGYMTLDSIRATLNFSKLKLSSNTRIAGYGYSGGAITLGWASSLKPSYAPELNIIGWSFGGTPSNLLGTINHIDGTIFSGLILAGVTGVTDVYPEIHEYIQTVLNSAGREGLEFCRNHCLQEIILRYPLKSIYSYEFQTRGKDVFNNATVQQMFTDLTMGIRPHETPDVPVFMYHAQHDEIVPYDDAHKTAKAWCRNGAQVKFTTYSHYEMGHFTTEITGSVPAFHFIRDLFNGKEVSQGCDFKTEDTLFFNPSVLGGNANEIIDAILGIFGQRIGPEGRILAAKKTVVKGSKSGSSLKSHSHSQTHKHRKDVSTISNA.

Residues 1-26 form the signal peptide; sequence MPSMLSLFYLAQSLFLLLLFPLYGHA. An intrachain disulfide couples Cys-119 to Cys-288. Asn-183 carries an N-linked (GlcNAc...) asparagine glycan. The active-site Nucleophile is Ser-201. N-linked (GlcNAc...) asparagine glycosylation is present at Asn-316. Active-site residues include Asp-348 and His-382. The tract at residues 461–488 is disordered; that stretch reads SKSGSSLKSHSHSQTHKHRKDVSTISNA. Basic residues predominate over residues 469-480; it reads SHSHSQTHKHRK.

The protein belongs to the AB hydrolase superfamily. Lipase family. Class Lip subfamily.

It localises to the secreted. The catalysed reaction is a triacylglycerol + H2O = a diacylglycerol + a fatty acid + H(+). The enzyme catalyses a monoacylglycerol + H2O = glycerol + a fatty acid + H(+). It catalyses the reaction a diacylglycerol + H2O = a monoacylglycerol + a fatty acid + H(+). With respect to regulation, inhibited by different metal ions including Fe(2+), Fe(3+), Cu(2+), and Zn(2+). The monovalent ions Na(+) and K(+) exhibit less dramatic inhibition. Its function is as follows. Secreted lipase that releases free fatty acids from monoacylglycerol and triacylglycerol but has no phospholipase or lysophospholipase activities. Has minor esterase activity. Due to an absence of fatty acid synthase genes in Malassezia species, secretory lipases are essential for the yeast to generate free fatty acids from degradation of sebum and assimilate them as lipid sources for growth. Plays important roles not only in lipid metabolism but also in the immune response of host cells and pathogenesis. Hydrolyzes lipids, such as Tween 20, 40 and 80, with Tween 80 being the best substrate. This Malassezia furfur (Pityriasis versicolor infection agent) protein is Secreted triacylglycerol lipase LIP1.